A 60-amino-acid polypeptide reads, in one-letter code: MAQLKITQTKSYIGSKQNHRDTLRSLGLKGINTQVVKEDRPEFRGMVHTVRHLVTVEEVD.

It belongs to the universal ribosomal protein uL30 family. Part of the 50S ribosomal subunit.

The protein is Large ribosomal subunit protein uL30 of Streptomyces avermitilis (strain ATCC 31267 / DSM 46492 / JCM 5070 / NBRC 14893 / NCIMB 12804 / NRRL 8165 / MA-4680).